The following is a 1027-amino-acid chain: MDDESDDKDDTKSFLCRKSRNLSEKKRRDQFNSLVNDLSALISTSSRKMDKSTVLKSTIAFLKNHNEATDRSKVFEIQQDWKPAFLSNDEYTHLMLESLDGFMMVFSSMGSIFYASESITSQLGYLPQDLYNMTIYDLAYEMDHEALLNIFMNPTPVIEPRQTDISSSNQITFYTHLRRGGMEKVDANAYELVKFVGYFRNDTNTSTGSSSEVSNGSNGQPAVLPRIFQQNPNAEVDKKLVFVGTGRVQNPQLIREMSIIDPTSNEFTSKHSMEWKFLFLDHRAPPIIGYMPFEVLGTSGYDYYHFDDLDSIVACHEELRQTGEGKSCYYRFLTKGQQWIWLQTDYYVSYHQFNSKPDYVVCTHKVVSYAEVLKDSRKEGQKSGNSNSITNNGSSKVIASTGTSSKSASATTTLRDFELSSQNLDSTLLGNSLASLGTETAATSPAVDSSPMWSASAVQPSGSCQINPLKTSRPASSYGNISSTGISPKAKRKCYFYNNRGNDSDSTSMSTDSVTSRQSMMTHVSSQSQRQRSHHREHHRENHHNQSHHHMQQQQQHQNQQQQHQQHQQLQQQLQHTVGTPKMVPLLPIASTQIMAGNACQFPQPAYPLASPQLVAPTFLEPPQYLTAIPMQPVIAPFPVAPVLSPLPVQSQTDMLPDTVVMTPTQSQLQDQLQRKHDELQKLILQQQNELRIVSEQLLLSRYTYLQPMMSMGFAPGNMTAAAVGNLGASGQRGLNFTGSNAVQPQFNQYGFALNSEQMLNQQDQQMMMQQQQNLHTQHQHNLQQQHQSHSQLQQHTQQQHQQQQQQQQQQQQQQQQQQQQQQQQQQQQQQQQQLQLQQQNDILLREDIDDIDAFLNLSPLHSLGSQSTINPFNSSSNNNNQSYNGGSNLNNGNQNNNNRSSNPPQNNNEDSLLSCMQMATESSPSINFHMGISDDGSETQSEDNKMMHTSGSNLVQQQQQQQQQQQILQQHQQQSNSFFSSNPFLNSQNQNQNQLPNDLEILPYQMSQEQSQNLFNSPHTAPGSSQ.

One can recognise a bHLH domain in the interval leucine 15–histidine 65. PAS domains follow at residues asparagine 88–proline 160 and arginine 255–glutamine 321. Disordered stretches follow at residues arginine 377–glycine 402, threonine 443–glutamine 575, glutamine 765–glutamine 800, threonine 869–aspartate 911, and serine 926–glutamine 1027. The segment covering serine 383–glycine 402 has biased composition (low complexity). A compositionally biased stretch (polar residues) spans threonine 443 to isoleucine 486. 2 stretches are compositionally biased toward low complexity: residues serine 504–serine 516 and glutamine 552–glutamine 575. Positions glutamine 780 to glutamine 1027 are implicated in the circadian rhythmicity. Composition is skewed to low complexity over residues asparagine 871–asparagine 909 and serine 951–glutamine 995. The span at glutamine 1006–glutamine 1027 shows a compositional bias: polar residues.

In terms of assembly, efficient DNA binding requires dimerization with another bHLH protein. Forms a heterodimer with Cycle. As to expression, widely expressed. Found in head, body, and appendage fractions.

Its subcellular location is the nucleus. In terms of biological role, circadian regulator that acts as a transcription factor and generates a rhythmic output with a period of about 24 hours. Oscillates in antiphase to the cycling observed for period (PER) and timeless (TIM). According to PubMed:9742131, reaches peak abundance within several hours of the dark-light transition at ZT0 (zeitgeber 0), whereas PubMed:9616122 describes bimodal oscillating expression with maximum at ZT5 and ZT23. Clock-cycle heterodimers activate cycling transcription of PER and TIM by binding to the E-box (5'-CACGTG-3') present in their promoters. Once induced, Period and Timeless block Clock's ability to transactivate their promoters. This is Circadian locomoter output cycles protein kaput (Clk) from Drosophila melanogaster (Fruit fly).